The sequence spans 359 residues: Nicotinate-nucleotide--dimethylbenzimidazole phosphoribosyltransferase (359 aa).

The active-site Proton acceptor is the E318.

It belongs to the CobT family. Homodimer.

The catalysed reaction is 5,6-dimethylbenzimidazole + nicotinate beta-D-ribonucleotide = alpha-ribazole 5'-phosphate + nicotinate + H(+). The protein operates within nucleoside biosynthesis; alpha-ribazole biosynthesis; alpha-ribazole from 5,6-dimethylbenzimidazole: step 1/2. Its function is as follows. Catalyzes the synthesis of alpha-ribazole-5'-phosphate from nicotinate mononucleotide (NAMN) and 5,6-dimethylbenzimidazole (DMB). The polypeptide is Nicotinate-nucleotide--dimethylbenzimidazole phosphoribosyltransferase (Shigella sonnei (strain Ss046)).